Here is a 555-residue protein sequence, read N- to C-terminus: MARKGNPISVRLGKNRSSDSSRFSEYYYGKFVYQDVNLRSYFGSIRPPTRLTFGFRLGRCILLHFPKRTFIHFFLPRRPRRLKRREKTRPGKEKGRWWTTPGKAGPIGCLRDDTEEERNEVRGRGARKRVESIRLDDRKKQNEIRGWPKKKQRYGYHDRTPSIKKNLSKSLRISGAFKHPKYGGVVNDIAFLIENDDSFRKTKLFKFFFPKKSRSDGPTSYLRTLPAVGPSLNFLVMQYFFNTKNQMNFDPVVVLNHFVAPGAAEPSTMGRANGTGDRSLQKRIRSRIAFFVESSTSEKKCLAEAKNRLTHLIRLANDLGFAGTTKTTISLFPFFGATFFFLRDGVGVTNNLDAREQLLNQLRVKCWNLLGKDKVMELIEKFKDLGGIEELIKVIDMMIEIILRKRGIPYGYNSYFNEVQKMRSFLSNRTNTKTLIESVKIKSVYQSASLIAQDISFQLKNKRRSTHSIFAKIVKEIPKRVEGIRICFSGRLKDAAEKAQTKCYKHRKTSRNVFNQKIDYAPAEVSTRYGISGVKVWISYSQKKGGRAISETYEI.

Residues M1 to S20 form a disordered region.

It belongs to the universal ribosomal protein uS3 family.

Its subcellular location is the mitochondrion. The chain is Small ribosomal subunit protein uS3m (RPS3) from Brassica napus (Rape).